A 764-amino-acid polypeptide reads, in one-letter code: Elongation factor G, mitochondrial (764 aa).

The transit peptide at 1–23 (MIRSLRAVSRLGARGFSSFAAAR) directs the protein to the mitochondrion. The 282-residue stretch at 56 to 337 (ARMRNIGISA…AICEYLPDPS (282 aa)) folds into the tr-type G domain. Residues 65–72 (AHIDSGKT), 136–140 (DTPGH), and 190–193 (NKMD) each bind GTP.

The protein belongs to the TRAFAC class translation factor GTPase superfamily. Classic translation factor GTPase family. EF-G/EF-2 subfamily.

It localises to the mitochondrion. The protein operates within protein biosynthesis; polypeptide chain elongation. Mitochondrial GTPase that catalyzes the GTP-dependent ribosomal translocation step during translation elongation. During this step, the ribosome changes from the pre-translocational (PRE) to the post-translocational (POST) state as the newly formed A-site-bound peptidyl-tRNA and P-site-bound deacylated tRNA move to the P and E sites, respectively. Catalyzes the coordinated movement of the two tRNA molecules, the mRNA and conformational changes in the ribosome. The chain is Elongation factor G, mitochondrial from Yarrowia lipolytica (strain CLIB 122 / E 150) (Yeast).